The chain runs to 200 residues: ADP-ribosylation factor-like protein 4D (200 aa).

The N-myristoyl glycine moiety is linked to residue glycine 2. Residues 27-34, 75-79, and 134-137 contribute to the GTP site; these read GLDSAGKT, DVGGQ, and NKQD.

Belongs to the small GTPase superfamily. Arf family. Interacts with CYTH2; the interaction is direct and ARL4D GTP-dependent. Does not interact with ARL4D.

Its subcellular location is the nucleus. It localises to the nucleolus. The protein localises to the cell membrane. It is found in the cytoplasm. Functionally, small GTP-binding protein which cycles between an inactive GDP-bound and an active GTP-bound form, and the rate of cycling is regulated by guanine nucleotide exchange factors (GEF) and GTPase-activating proteins (GAP). GTP-binding protein that does not act as an allosteric activator of the cholera toxin catalytic subunit. Recruits CYTH1, CYTH2, CYTH3 and CYTH4 to the plasma membrane in GDP-bound form. In Bos taurus (Bovine), this protein is ADP-ribosylation factor-like protein 4D (ARL4D).